The primary structure comprises 167 residues: Transmembrane protein 229B (167 aa).

The Cytoplasmic segment spans residues 1–14; it reads MASAEPLTALSRWY. The chain crosses the membrane as a helical span at residues 15–35; sequence LYAIHGYFCEVMFTAAWEFVV. The Extracellular segment spans residues 36–40; it reads NLNWK. A helical membrane pass occupies residues 41–61; the sequence is FPGVTSVWALFIYGTSILIVE. Over 62–73 the chain is Cytoplasmic; it reads RMYLRLRGRCPL. A helical membrane pass occupies residues 74–94; the sequence is LLRCLIYTLWTYLWEFTTGFI. Residues 95-109 lie on the Extracellular side of the membrane; that stretch reads LRQFNACPWDYSQFD. The helical transmembrane segment at 110–130 threads the bilayer; it reads FDFMGLITLEYAVPWFCGALI. Residues 131-167 are Cytoplasmic-facing; sequence MEQFIIRNTLRLRFDKDAEPGEPSGALALANGHVKTD.

Belongs to the TMEM229 family.

It is found in the membrane. The polypeptide is Transmembrane protein 229B (TMEM229B) (Homo sapiens (Human)).